Reading from the N-terminus, the 161-residue chain is Protein-export protein SecB (161 aa).

Belongs to the SecB family. In terms of assembly, homotetramer, a dimer of dimers. One homotetramer interacts with 1 SecA dimer.

It is found in the cytoplasm. In terms of biological role, one of the proteins required for the normal export of preproteins out of the cell cytoplasm. It is a molecular chaperone that binds to a subset of precursor proteins, maintaining them in a translocation-competent state. It also specifically binds to its receptor SecA. The protein is Protein-export protein SecB of Coxiella burnetii (strain CbuG_Q212) (Coxiella burnetii (strain Q212)).